The following is a 318-amino-acid chain: MPREDRATWKSNYFLKIIQLLDDYPKCFIVGADNVGSKQMQQIRMSLRGKAVVLMGKNTMMRKAIRGHLENNPALEKLLPHIRGNVGFVFTKEDLTEIRDMLLANKVPAAARAGAIAPCEVTVPAQNTGLGPEKTSFFQALGITTKISRGTIEILSDVQLIKTGDKVGASEATLLNMLNISPFSFGLVIQQVFDNGSIYNPEVLDITEETLHSRFLEGVRNVASVCLQIGYPTVASVPHSIINGYKRVLALSVETDYTFPLAEKVKAFLADPSAFVAAAPVAAAPAAAPAATTAAPAKVEAKEESEESDEDMGFGLFD.

The residue at position 24 (tyrosine 24) is a Phosphotyrosine. Threonine 59 is subject to Phosphothreonine. Lysine 264 is covalently cross-linked (Glycyl lysine isopeptide (Lys-Gly) (interchain with G-Cter in ubiquitin)). Positions 293-318 are disordered; sequence TAAPAKVEAKEESEESDEDMGFGLFD. Lysine 298 participates in a covalent cross-link: Glycyl lysine isopeptide (Lys-Gly) (interchain with G-Cter in SUMO1); alternate. Residue lysine 298 forms a Glycyl lysine isopeptide (Lys-Gly) (interchain with G-Cter in SUMO2); alternate linkage. Acidic residues predominate over residues 303–312; it reads EESEESDEDM. Residues serine 305 and serine 308 each carry the phosphoserine modification.

It belongs to the universal ribosomal protein uL10 family. As to quaternary structure, P0 forms a pentameric complex by interaction with dimers of P1 and P2. Identified in a IGF2BP1-dependent mRNP granule complex containing untranslated mRNAs. Interacts with APEX1. Interacts with FMR1. Post-translationally, ubiquitinated at Lys-264 by RNF14 and RNF25 in response to ribosome collisions (ribosome stalling).

It is found in the nucleus. The protein resides in the cytoplasm. Its function is as follows. Ribosomal protein P0 is the functional equivalent of E.coli protein L10. This is Large ribosomal subunit protein uL10 (RPLP0) from Bos taurus (Bovine).